Here is a 132-residue protein sequence, read N- to C-terminus: Large ribosomal subunit protein uL14 (132 aa).

It belongs to the universal ribosomal protein uL14 family. In terms of assembly, part of the 50S ribosomal subunit. Forms a cluster with proteins L3 and L24e, part of which may contact the 16S rRNA in 2 intersubunit bridges.

Binds to 23S rRNA. Forms part of two intersubunit bridges in the 70S ribosome. In Methanosarcina mazei (strain ATCC BAA-159 / DSM 3647 / Goe1 / Go1 / JCM 11833 / OCM 88) (Methanosarcina frisia), this protein is Large ribosomal subunit protein uL14.